We begin with the raw amino-acid sequence, 464 residues long: Protein FAM90A20 (464 aa).

Disordered regions lie at residues arginine 16–leucine 42, alanine 71–proline 213, proline 228–threonine 247, valine 254–alanine 273, arginine 309–alanine 389, and glutamate 418–proline 437. Composition is skewed to basic and acidic residues over residues glycine 74–lysine 83 and asparagine 97–arginine 114. The span at leucine 180–leucine 197 shows a compositional bias: low complexity.

It belongs to the FAM90 family.

This is Protein FAM90A20 from Homo sapiens (Human).